A 481-amino-acid polypeptide reads, in one-letter code: Beta-amyrin 16-beta-monooxygenase (481 aa).

A helical membrane pass occupies residues 4–24 (LFIIISLVIVILTTIFILSNL). Residue Cys428 coordinates heme.

The protein belongs to the cytochrome P450 family. Heme serves as cofactor. As to expression, highly expressed in roots. Expressed at very low levels in leaves and petals.

The protein localises to the membrane. The catalysed reaction is beta-amyrin + reduced [NADPH--hemoprotein reductase] + O2 = maniladiol + oxidized [NADPH--hemoprotein reductase] + H2O + H(+). It carries out the reaction oleanolate + reduced [NADPH--hemoprotein reductase] + O2 = cochalate + oxidized [NADPH--hemoprotein reductase] + H2O + H(+). Involved in triterpenoid saponin biosynthesis in roots. Catalyzes the hydroxylation of beta-amyrin at the C-16 beta position to form maniladiol. Is also able to oxidize oleanolat to cochalate. Has weak activity catalyzing the three-step oxidation at C-28 of beta-amyrin to form oleanolate. This chain is Beta-amyrin 16-beta-monooxygenase, found in Platycodon grandiflorus (Balloon flower).